The primary structure comprises 102 residues: Aspartyl/glutamyl-tRNA(Asn/Gln) amidotransferase subunit C (102 aa).

This sequence belongs to the GatC family. In terms of assembly, heterotrimer of A, B and C subunits.

It catalyses the reaction L-glutamyl-tRNA(Gln) + L-glutamine + ATP + H2O = L-glutaminyl-tRNA(Gln) + L-glutamate + ADP + phosphate + H(+). It carries out the reaction L-aspartyl-tRNA(Asn) + L-glutamine + ATP + H2O = L-asparaginyl-tRNA(Asn) + L-glutamate + ADP + phosphate + 2 H(+). Its function is as follows. Allows the formation of correctly charged Asn-tRNA(Asn) or Gln-tRNA(Gln) through the transamidation of misacylated Asp-tRNA(Asn) or Glu-tRNA(Gln) in organisms which lack either or both of asparaginyl-tRNA or glutaminyl-tRNA synthetases. The reaction takes place in the presence of glutamine and ATP through an activated phospho-Asp-tRNA(Asn) or phospho-Glu-tRNA(Gln). This chain is Aspartyl/glutamyl-tRNA(Asn/Gln) amidotransferase subunit C, found in Lactobacillus acidophilus (strain ATCC 700396 / NCK56 / N2 / NCFM).